The chain runs to 304 residues: MIYTCTMNTAVDLFVETDELLPDVVNRTKDEDYQPNGKGVNISFMLKRLGLDNTALGFTGGFTGRFIENELLNEKIVTDFVEVEGISRINIFINSTREFKIVNKGPLISEARKQELINKIRQIPPGRFLFISGSLPRGVPDDMYLSLSEIAAENKLKLILDISSPVLLDCLSYHPYLIKPNEQELAAFFSRKKALSEEEIIHCGKELLDRGAERVLISRGKDGALYLDRQRTLKATAAKGKVVNTACAGDAMLAVFVGKQELGCSVPEALRHASAAGSLTAFSKGLGDVSKLDQTASQIQITHL.

Asp250 serves as the catalytic Proton acceptor.

It belongs to the carbohydrate kinase PfkB family. The cofactor is Mg(2+).

The enzyme catalyses alpha-D-tagatopyranose 1-phosphate + ATP = D-tagatofuranose 1,6-bisphosphate + ADP + H(+). The protein operates within carbohydrate degradation. Its activity is regulated as follows. Activity is inhibited by tagatose-6-phosphate and fructose-6-phosphate. Functionally, kinase involved in a D-tagatose catabolic pathway. Catalyzes the phosphorylation of D-tagatose-1-phosphate (Tag-1P) to D-tagatose-1,6-bisphosphate. Can also use D-fructose-1-phosphate, with 40-fold lower catalytic efficiency, but not tagatose-6-phosphate or fructose-6-phosphate. The substrate, which occurs in a pyranose form in solution, may undergo a change to the furanose conformation after binding to the enzyme, in order to permit phosphorylation at C-6. The protein is D-tagatose-1-phosphate kinase of Bacillus licheniformis (strain ATCC 14580 / DSM 13 / JCM 2505 / CCUG 7422 / NBRC 12200 / NCIMB 9375 / NCTC 10341 / NRRL NRS-1264 / Gibson 46).